A 1002-amino-acid polypeptide reads, in one-letter code: Inversin-B (1002 aa).

16 ANK repeats span residues 9-39, 43-72, 76-105, 109-140, 144-173, 177-209, 216-246, 250-279, 284-313, 317-346, 352-381, 385-414, 418-447, 451-480, 484-513, and 519-549; these read SLAS…VIDQ, LGRT…KVNR, SGRT…DCTH, CDIT…QVDA, RKQT…NIGI, EGKI…TESL, EGRT…NVAP, LFRT…SPNI, QGAT…VRDE, EGRT…KLEV, YGGT…QADA, MKHT…KVHL, DGRS…NPDA, EGRT…DPNI, NGRT…FPNQ, and ERYT…SIAA. The D-box 1 motif lies at 486–494; it reads RTALHWSCN. Residues 551 to 580 enclose the IQ 1 domain; sequence QDIAAFKIQAVYKGHKVRRAFQERKNLLMK. 3 stretches are compositionally biased toward basic and acidic residues: residues 586–599, 609–621, and 643–656; these read KGAA…ENRQ, KQKD…RQNK, and AEDR…ENLE. 2 disordered regions span residues 586–804 and 862–886; these read KGAA…KGRR and SAKT…SSSA. 2 stretches are compositionally biased toward polar residues: residues 670-680 and 687-706; these read QRITAQIQSSP and NSIQ…SSPL. Basic and acidic residues-rich tracts occupy residues 733–763 and 770–796; these read HQME…EERK and QSSD…EGKK. Residues 959–967 carry the D-box 2 motif; that stretch reads RKQLFQRKN. Residues 966–995 enclose the IQ 2 domain; it reads KNHAATVIQKAWRTYWVRKSSCKTRHSRSQ.

Interacts with apc2. Binds calmodulin.

The protein resides in the cytoplasm. It is found in the cytoskeleton. Functionally, required for normal renal development and establishment of left-right axis. Probably acts as a molecular switch between different Wnt signaling pathways. Inhibits the canonical Wnt pathway by targeting cytoplasmic disheveled for degradation by the ubiquitin-proteasome. This suggests that it is required in renal development to oppose the repression of terminal differentiation of tubular epithelial cells by Wnt signaling. Plays a central role in convergent extension movements in gastrulating embryos, a processus regulated by Wnt signaling. This Xenopus laevis (African clawed frog) protein is Inversin-B (invs-b).